The sequence spans 247 residues: MSVTMREMLEAGCHFGHQTRFWNPKMAPFIFGHRNKIHIINLEKTLPMFQDALKYVRQLAANRGTIMFVGTKRQSREILAEEAGRAGMPYVDARWLGGMLTNFKTVKTSIKRLKDMEAAKEAGALDTMSKKEALMFEREMIKLEKSIGGIKEMGGIPDAIFVVDVGYHKIAVTEANKLGIPVIGVVDTNHSPEGIDYVIPGNDDSSKAVALYVRGVADAILEGRANAVQEVVEAARGGDDFVEVQEG.

This sequence belongs to the universal ribosomal protein uS2 family.

In Cupriavidus pinatubonensis (strain JMP 134 / LMG 1197) (Cupriavidus necator (strain JMP 134)), this protein is Small ribosomal subunit protein uS2.